Here is a 207-residue protein sequence, read N- to C-terminus: Large ribosomal subunit protein uL4 (207 aa).

This sequence belongs to the universal ribosomal protein uL4 family. Part of the 50S ribosomal subunit.

Its function is as follows. One of the primary rRNA binding proteins, this protein initially binds near the 5'-end of the 23S rRNA. It is important during the early stages of 50S assembly. It makes multiple contacts with different domains of the 23S rRNA in the assembled 50S subunit and ribosome. In terms of biological role, forms part of the polypeptide exit tunnel. The polypeptide is Large ribosomal subunit protein uL4 (Geobacter metallireducens (strain ATCC 53774 / DSM 7210 / GS-15)).